The chain runs to 329 residues: Phosphate acyltransferase (329 aa).

Belongs to the PlsX family. In terms of assembly, homodimer. Probably interacts with PlsY.

It is found in the cytoplasm. It carries out the reaction a fatty acyl-[ACP] + phosphate = an acyl phosphate + holo-[ACP]. The protein operates within lipid metabolism; phospholipid metabolism. In terms of biological role, catalyzes the reversible formation of acyl-phosphate (acyl-PO(4)) from acyl-[acyl-carrier-protein] (acyl-ACP). This enzyme utilizes acyl-ACP as fatty acyl donor, but not acyl-CoA. This chain is Phosphate acyltransferase, found in Sulfurovum sp. (strain NBC37-1).